We begin with the raw amino-acid sequence, 198 residues long: HTH-type transcriptional regulator BetI (198 aa).

In terms of domain architecture, HTH tetR-type spans 8-68 (PLRRRELIDA…ATMRHLLREL (61 aa)). Residues 31–50 (TVAQIAHEAGVSPALAHHYF) constitute a DNA-binding region (H-T-H motif).

It functions in the pathway amine and polyamine biosynthesis; betaine biosynthesis via choline pathway [regulation]. Its function is as follows. Repressor involved in the biosynthesis of the osmoprotectant glycine betaine. It represses transcription of the choline transporter BetT and the genes of BetAB involved in the synthesis of glycine betaine. This chain is HTH-type transcriptional regulator BetI, found in Brucella suis biovar 1 (strain 1330).